A 218-amino-acid polypeptide reads, in one-letter code: Thiamine-phosphate synthase (218 aa).

4-amino-2-methyl-5-(diphosphooxymethyl)pyrimidine contacts are provided by residues 45-49 (QYREK) and asparagine 77. Residues aspartate 78 and aspartate 97 each contribute to the Mg(2+) site. Serine 116 lines the 4-amino-2-methyl-5-(diphosphooxymethyl)pyrimidine pocket. 142-144 (TKT) is a binding site for 2-[(2R,5Z)-2-carboxy-4-methylthiazol-5(2H)-ylidene]ethyl phosphate. Position 145 (lysine 145) interacts with 4-amino-2-methyl-5-(diphosphooxymethyl)pyrimidine. 2-[(2R,5Z)-2-carboxy-4-methylthiazol-5(2H)-ylidene]ethyl phosphate contacts are provided by residues glycine 173 and 193 to 194 (VT).

This sequence belongs to the thiamine-phosphate synthase family. It depends on Mg(2+) as a cofactor.

The catalysed reaction is 2-[(2R,5Z)-2-carboxy-4-methylthiazol-5(2H)-ylidene]ethyl phosphate + 4-amino-2-methyl-5-(diphosphooxymethyl)pyrimidine + 2 H(+) = thiamine phosphate + CO2 + diphosphate. The enzyme catalyses 2-(2-carboxy-4-methylthiazol-5-yl)ethyl phosphate + 4-amino-2-methyl-5-(diphosphooxymethyl)pyrimidine + 2 H(+) = thiamine phosphate + CO2 + diphosphate. It carries out the reaction 4-methyl-5-(2-phosphooxyethyl)-thiazole + 4-amino-2-methyl-5-(diphosphooxymethyl)pyrimidine + H(+) = thiamine phosphate + diphosphate. Its pathway is cofactor biosynthesis; thiamine diphosphate biosynthesis; thiamine phosphate from 4-amino-2-methyl-5-diphosphomethylpyrimidine and 4-methyl-5-(2-phosphoethyl)-thiazole: step 1/1. Its function is as follows. Condenses 4-methyl-5-(beta-hydroxyethyl)thiazole monophosphate (THZ-P) and 2-methyl-4-amino-5-hydroxymethyl pyrimidine pyrophosphate (HMP-PP) to form thiamine monophosphate (TMP). The protein is Thiamine-phosphate synthase of Pelotomaculum thermopropionicum (strain DSM 13744 / JCM 10971 / SI).